Here is a 293-residue protein sequence, read N- to C-terminus: Actin-related protein 2/3 complex subunit 2 (293 aa).

Belongs to the ARPC2 family. In terms of assembly, component of the Arp2/3 complex composed of arpB/Arp2, arpC/Arp3, arcA/p41-arc, arcB/p34-arc, arcC/p21-arc, arcD/p20-arc and arcE/p16-arc. Interacts with carmil (via the region between the LRR domain and COOH-terminal proline-rich domain); carmil is required for Arp2/3-dependent actin nucleation. Arp2/3 complex, MyoB, MyoC, and the alpha and beta subunits of capping protein all form a larger complex with carmil.

It is found in the cytoplasm. The protein resides in the cytoskeleton. The protein localises to the cell projection. Its subcellular location is the cytosol. It localises to the cell cortex. It is found in the pseudopodium. Functionally, functions as a component of the Arp2/3 complex which is involved in regulation of actin polymerization and together with an activating nucleation-promoting factor (NPF) mediates the formation of branched actin networks. Seems to contact the pointed end of the daughter actin filament. The Arp2/3 complex is involved in organizing the actin system in cell motility and chemotaxis, in phagocytosis and macropinocytosis, at late steps of endosome processing, and in mitosis. In concert with a group of other proteins, the Arp2/3 complex plays a general role in the rapid activation and adaptation of the actin system to its multiple functions. This chain is Actin-related protein 2/3 complex subunit 2 (arcB), found in Dictyostelium discoideum (Social amoeba).